A 339-amino-acid chain; its full sequence is 5-dehydro-2-deoxygluconokinase (339 aa).

The protein belongs to the carbohydrate kinase PfkB family.

It carries out the reaction 5-dehydro-2-deoxy-D-gluconate + ATP = 6-phospho-5-dehydro-2-deoxy-D-gluconate + ADP + H(+). It functions in the pathway polyol metabolism; myo-inositol degradation into acetyl-CoA; acetyl-CoA from myo-inositol: step 5/7. In terms of biological role, catalyzes the phosphorylation of 5-dehydro-2-deoxy-D-gluconate (2-deoxy-5-keto-D-gluconate or DKG) to 6-phospho-5-dehydro-2-deoxy-D-gluconate (DKGP). The protein is 5-dehydro-2-deoxygluconokinase of Clostridium botulinum (strain Alaska E43 / Type E3).